We begin with the raw amino-acid sequence, 183 residues long: Copper transporter 4 (183 aa).

The interval 1-21 is disordered; sequence MAMPMPMPPPGPGGDAPPAPT. 2 consecutive transmembrane segments (helical) span residues 56–76 and 115–135; these read VGMY…AEAL and LAYL…LAAV.

The protein belongs to the copper transporter (Ctr) (TC 1.A.56) family. SLC31A subfamily.

The protein resides in the membrane. Involved in the transport of copper. The chain is Copper transporter 4 (COPT4) from Oryza sativa subsp. japonica (Rice).